Here is a 326-residue protein sequence, read N- to C-terminus: Amino acid--[acyl-carrier-protein] ligase 1 (326 aa).

Cys131 is a binding site for Zn(2+). ATP is bound by residues Arg159, Glu161, and 168–169; that span reads RL. Residue Glu176 coordinates Zn(2+). An an L-alpha-amino acid-binding site is contributed by Glu176. ATP-binding positions include Lys235 and 250 to 253; that span reads ACMS. Residue Cys279 participates in Zn(2+) binding. Arg286 is an ATP binding site.

This sequence belongs to the class-II aminoacyl-tRNA synthetase family. Amino acid--[acyl-carrier-protein] ligase subfamily. Homodimer. Zn(2+) is required as a cofactor.

It carries out the reaction an L-alpha-amino acid + holo-[ACP] + ATP = an L-alpha-aminoacyl-[ACP] + AMP + diphosphate. In terms of biological role, catalyzes the ATP-dependent activation of L-glycine and its transfer to the phosphopantetheine prosthetic group covalently attached to the vicinal carrier protein bsr0959 of yet unknown function. May participate in nonribosomal peptide synthesis or related processes. L-alanine is a poor substrate whereas L-serine or D-amino acids are not substrates for ATP-dependent activation. Does not display tRNA aminoacylation activity. In Bradyrhizobium diazoefficiens (strain JCM 10833 / BCRC 13528 / IAM 13628 / NBRC 14792 / USDA 110), this protein is Amino acid--[acyl-carrier-protein] ligase 1.